The sequence spans 152 residues: UPF0178 protein Shewmr7_1635 (152 aa).

This sequence belongs to the UPF0178 family.

In Shewanella sp. (strain MR-7), this protein is UPF0178 protein Shewmr7_1635.